Reading from the N-terminus, the 162-residue chain is Protein-export protein SecB (162 aa).

The protein belongs to the SecB family. In terms of assembly, homotetramer, a dimer of dimers. One homotetramer interacts with 1 SecA dimer.

The protein localises to the cytoplasm. In terms of biological role, one of the proteins required for the normal export of preproteins out of the cell cytoplasm. It is a molecular chaperone that binds to a subset of precursor proteins, maintaining them in a translocation-competent state. It also specifically binds to its receptor SecA. The protein is Protein-export protein SecB of Legionella pneumophila subsp. pneumophila (strain Philadelphia 1 / ATCC 33152 / DSM 7513).